A 379-amino-acid polypeptide reads, in one-letter code: Putative glutamate--cysteine ligase 2 (379 aa).

This sequence belongs to the glutamate--cysteine ligase type 2 family. YbdK subfamily.

The catalysed reaction is L-cysteine + L-glutamate + ATP = gamma-L-glutamyl-L-cysteine + ADP + phosphate + H(+). In terms of biological role, ATP-dependent carboxylate-amine ligase which exhibits weak glutamate--cysteine ligase activity. This is Putative glutamate--cysteine ligase 2 from Mycobacterium avium (strain 104).